A 188-amino-acid chain; its full sequence is MGGGWWWARAARLARLRFRGALLPPPRPRSGGARGSFAPGHGPRAGASPPPVSELDRADAWLLRKAHETAFLSWFRNGLLASGIGVISFMQSDMGREAAYGFFLLGGLCVVWGGASYVVGLAALRGPMQLSVGGAAAGVGAVLAAGLLWACAVGLYMGQLELDVELVPEDDGTTAAEGPDEAGRPPPE.

Residues 1–96 (MGGGWWWARA…ISFMQSDMGR (96 aa)) constitute a mitochondrion transit peptide. A disordered region spans residues 25 to 52 (PPRPRSGGARGSFAPGHGPRAGASPPPV). The segment covering 29 to 38 (RSGGARGSFA) has biased composition (low complexity). Ser-48 carries the post-translational modification Phosphoserine. The next 2 membrane-spanning stretches (helical) occupy residues 102–122 (FFLL…VGLA) and 135–155 (AAAG…AVGL).

The protein belongs to the TMEM160 family.

It localises to the mitochondrion inner membrane. The polypeptide is Transmembrane protein 160 (Bos taurus (Bovine)).